A 436-amino-acid chain; its full sequence is Trigger factor (436 aa).

In terms of domain architecture, PPIase FKBP-type spans 161 to 246; sequence EDQLNIDFVG…VNTVSEPKLP (86 aa).

It belongs to the FKBP-type PPIase family. Tig subfamily.

The protein localises to the cytoplasm. The catalysed reaction is [protein]-peptidylproline (omega=180) = [protein]-peptidylproline (omega=0). Functionally, involved in protein export. Acts as a chaperone by maintaining the newly synthesized protein in an open conformation. Functions as a peptidyl-prolyl cis-trans isomerase. The polypeptide is Trigger factor (Pseudomonas fluorescens (strain Pf0-1)).